Consider the following 116-residue polypeptide: Putative membrane protein insertion efficiency factor (116 aa).

This sequence belongs to the UPF0161 family.

It localises to the cell inner membrane. Functionally, could be involved in insertion of integral membrane proteins into the membrane. This is Putative membrane protein insertion efficiency factor from Bartonella tribocorum (strain CIP 105476 / IBS 506).